The following is a 194-amino-acid chain: Imidazoleglycerol-phosphate dehydratase (194 aa).

The protein belongs to the imidazoleglycerol-phosphate dehydratase family.

The protein localises to the cytoplasm. The catalysed reaction is D-erythro-1-(imidazol-4-yl)glycerol 3-phosphate = 3-(imidazol-4-yl)-2-oxopropyl phosphate + H2O. The protein operates within amino-acid biosynthesis; L-histidine biosynthesis; L-histidine from 5-phospho-alpha-D-ribose 1-diphosphate: step 6/9. This chain is Imidazoleglycerol-phosphate dehydratase, found in Caldicellulosiruptor bescii (strain ATCC BAA-1888 / DSM 6725 / KCTC 15123 / Z-1320) (Anaerocellum thermophilum).